Here is a 461-residue protein sequence, read N- to C-terminus: Asparagine--tRNA ligase (461 aa).

It belongs to the class-II aminoacyl-tRNA synthetase family. Homodimer.

The protein resides in the cytoplasm. It carries out the reaction tRNA(Asn) + L-asparagine + ATP = L-asparaginyl-tRNA(Asn) + AMP + diphosphate + H(+). The chain is Asparagine--tRNA ligase from Nitratidesulfovibrio vulgaris (strain ATCC 29579 / DSM 644 / CCUG 34227 / NCIMB 8303 / VKM B-1760 / Hildenborough) (Desulfovibrio vulgaris).